Reading from the N-terminus, the 480-residue chain is Zinc finger protein ztf-16 (480 aa).

A C2H2-type 1 zinc finger spans residues 5 to 27; that stretch reads NACTECGFTTTVFSEFQGHIEKH. Residues 25–75 are disordered; sequence EKHENEHSRSSSGEMSNSQTIEWGDGIQSSTPSPRSTPPSDPTPSPDSDEH. The span at 34–45 shows a compositional bias: polar residues; it reads SSSGEMSNSQTI. Residues 59-69 are compositionally biased toward pro residues; sequence RSTPPSDPTPS. C2H2-type zinc fingers lie at residues 103–125, 133–155, 161–183, 190–215, and 223–246; these read HVCP…LEAH, YQCD…RMRH, YECR…SMTH, FDCP…EETH, and ASCK…QTRH. Disordered stretches follow at residues 243–275, 290–311, and 376–417; these read QTRH…MDPA, EFSP…DKIP, and TSSS…KEDE. Residues 244–259 show a composition bias toward basic and acidic residues; the sequence is TRHDDSESSPKKENTP. 2 stretches are compositionally biased toward low complexity: residues 292–305 and 376–403; these read SPPN…STSS and TSSS…SLSL. Residues 404–413 are compositionally biased toward basic and acidic residues; the sequence is TEKEKSPTPE. C2H2-type zinc fingers lie at residues 420 to 442 and 448 to 472; these read VECC…KSLH and FKCA…FADH.

This sequence belongs to the Ikaros C2H2-type zinc-finger protein family. In terms of tissue distribution, expressed in the somatic gonad, hypodermis and cells in the head and tail. Expressed in amphid and phasmid sheath glia, amphid and phasmid socket glia, and in neurons in the head.

It localises to the nucleus. Its function is as follows. Positively regulates the expression of ver-1 in the amphid sheath glia of amphid sensory neurons. Together with ehn-3, plays a role in somatic gonad development and is required for proper gonadal primordium assembly and somatic gonad precursor cell morphology. In Caenorhabditis elegans, this protein is Zinc finger protein ztf-16.